A 378-amino-acid polypeptide reads, in one-letter code: L-lactate dehydrogenase (378 aa).

In terms of domain architecture, FMN hydroxy acid dehydrogenase spans 1–378; the sequence is MIISASTDYR…ELSRDSLVKR (378 aa). Y24 lines the substrate pocket. FMN contacts are provided by S106 and Q127. Y129 is a substrate binding site. T155 is an FMN binding site. R164 provides a ligand contact to substrate. Residue K251 coordinates FMN. The active-site Proton acceptor is H275. R278 contacts substrate. 306–330 provides a ligand contact to FMN; sequence DSGIRTGLDVVRMLALGADCTMLGR.

Belongs to the FMN-dependent alpha-hydroxy acid dehydrogenase family. It depends on FMN as a cofactor.

The protein localises to the cell inner membrane. The enzyme catalyses (S)-lactate + A = pyruvate + AH2. In terms of biological role, catalyzes the conversion of L-lactate to pyruvate. Is coupled to the respiratory chain. This Vibrio cholerae serotype O1 (strain ATCC 39315 / El Tor Inaba N16961) protein is L-lactate dehydrogenase.